Consider the following 462-residue polypeptide: Cysteine--tRNA ligase (462 aa).

Position 27 (cysteine 27) interacts with Zn(2+). Residues 29-39 (PTVYDLAHIGN) carry the 'HIGH' region motif. Positions 211, 236, and 240 each coordinate Zn(2+). A 'KMSKS' region motif is present at residues 270 to 274 (KMSKS). Lysine 273 lines the ATP pocket.

The protein belongs to the class-I aminoacyl-tRNA synthetase family. Monomer. The cofactor is Zn(2+).

It localises to the cytoplasm. It catalyses the reaction tRNA(Cys) + L-cysteine + ATP = L-cysteinyl-tRNA(Cys) + AMP + diphosphate. This Anaplasma phagocytophilum (strain HZ) protein is Cysteine--tRNA ligase.